Consider the following 611-residue polypeptide: Angiotensin-converting enzyme (611 aa).

An N-terminal signal peptide occupies residues 1–17 (MKLLVVTILAGLAVCHG). Residues 19–607 (TKEEIVATEY…VESLCHQRYK (589 aa)) enclose the Peptidase M2 domain. N-linked (GlcNAc...) asparagine glycosylation occurs at asparagine 53. Cysteine 133 and cysteine 141 are joined by a disulfide. N-linked (GlcNAc...) asparagine glycosylation is present at asparagine 196. A disulfide bridge links cysteine 336 with cysteine 354. Histidine 367 contributes to the Zn(2+) binding site. The Proton acceptor role is filled by glutamate 368. Residues histidine 371 and glutamate 395 each coordinate Zn(2+). Catalysis depends on histidine 497, which acts as the Proton donor. A disulfide bond links cysteine 522 and cysteine 540. Asparagine 531 is a glycosylation site (N-linked (GlcNAc...) asparagine).

This sequence belongs to the peptidase M2 family. The cofactor is Zn(2+). As to expression, expressed in the compound ganglion and in the posterior region of the midgut.

Its subcellular location is the secreted. It is found in the extracellular space. The catalysed reaction is Release of a C-terminal dipeptide, oligopeptide-|-Xaa-Yaa, when Xaa is not Pro, and Yaa is neither Asp nor Glu. Thus, conversion of angiotensin I to angiotensin II, with increase in vasoconstrictor activity, but no action on angiotensin II.. Involved in the specific maturation or degradation of a number of bioactive peptides. The sequence is that of Angiotensin-converting enzyme (ACE) from Haematobia irritans exigua (Buffalo fly).